The primary structure comprises 313 residues: Small ribosomal subunit biogenesis GTPase RsgA (313 aa).

A CP-type G domain is found at 80–237 (KVALRQVIVS…LIDTPGIKEF (158 aa)). GTP-binding positions include 129–132 (NKVD) and 180–188 (GQSGVGKSS). Zn(2+) is bound by residues Cys261, Cys266, His268, and Cys274.

It belongs to the TRAFAC class YlqF/YawG GTPase family. RsgA subfamily. Monomer. Associates with 30S ribosomal subunit, binds 16S rRNA. Requires Zn(2+) as cofactor.

The protein resides in the cytoplasm. Functionally, one of several proteins that assist in the late maturation steps of the functional core of the 30S ribosomal subunit. Helps release RbfA from mature subunits. May play a role in the assembly of ribosomal proteins into the subunit. Circularly permuted GTPase that catalyzes slow GTP hydrolysis, GTPase activity is stimulated by the 30S ribosomal subunit. This Borrelia recurrentis (strain A1) protein is Small ribosomal subunit biogenesis GTPase RsgA.